The chain runs to 578 residues: XK-related protein 6 (578 aa).

A run of 7 helical transmembrane segments spans residues 86 to 106 (WIVLALLVFFWDVGTDLWLAV), 114 to 134 (FLWSGLTLFFVLVPSVLVQIL), 253 to 273 (WLQCVSALSSLLSLAWVLASY), 307 to 327 (VLSLALFASVFHIYFGIFVVL), 348 to 368 (WEEVLFNMVVGVVYVFCWFNV), 377 to 397 (MVAYYVVVLLENVILTSLWYA), and 410 to 430 (LALCGVFLCFASGVACMVLYY).

It belongs to the XK family.

Its subcellular location is the cell membrane. In Tetraodon nigroviridis (Spotted green pufferfish), this protein is XK-related protein 6 (xkr6).